A 380-amino-acid chain; its full sequence is Putative zinc finger protein C02F5.12 (380 aa).

A disordered region spans residues 137–187 (NLDIPGTSSDIPSDPSSALKVPKKEVLDESEEILDQTSGSSSFSLNDSEQA). Composition is skewed to polar residues over residues 142–152 (GTSSDIPSDPS) and 171–187 (DQTSGSSSFSLNDSEQA). The segment at 271–294 (IPCKLCGFECTNVRRMRSHYAKAH) adopts a C2H2-type zinc-finger fold.

It localises to the nucleus. The polypeptide is Putative zinc finger protein C02F5.12 (Caenorhabditis elegans).